Consider the following 92-residue polypeptide: DNA-directed RNA polymerase subunit Rpo5 (92 aa).

This sequence belongs to the archaeal Rpo5/eukaryotic RPB5 RNA polymerase subunit family. As to quaternary structure, part of the RNA polymerase complex.

It localises to the cytoplasm. The catalysed reaction is RNA(n) + a ribonucleoside 5'-triphosphate = RNA(n+1) + diphosphate. Its function is as follows. DNA-dependent RNA polymerase (RNAP) catalyzes the transcription of DNA into RNA using the four ribonucleoside triphosphates as substrates. This is DNA-directed RNA polymerase subunit Rpo5 from Methanopyrus kandleri (strain AV19 / DSM 6324 / JCM 9639 / NBRC 100938).